We begin with the raw amino-acid sequence, 351 residues long: MSANKKVRGEIMGISEREKLVLNAIVDYYLTVGDTIGSRTLVKKYGIELSSATIRNVMADLEDMGFIEKTHTSSGRIPTDMGYKYYLTELLKVEKITQEEIENISNVYNRRVDELENILKKTSTLLSKLTNYAGIAVEPKPDNKKVSRVELVYIDEYLVMAIIVMDDRRVKTKNIHLAYPISKEEVEKKVDELNAKIRNNEIAINDIEKFFTESTDIVYEYDDEDELSKYFINNLPSMLKNENIAEVTDVIEFFNERKDIRELFEKLIEQKAQENSKSNVNVILGDELGIKELEDFSFVYSIYDIGGAQGIIGVMGPKRMAYSKTMGLINHVSREVNKLINSMEKDKNKKV.

The protein belongs to the HrcA family.

Negative regulator of class I heat shock genes (grpE-dnaK-dnaJ and groELS operons). Prevents heat-shock induction of these operons. The sequence is that of Heat-inducible transcription repressor HrcA from Fusobacterium nucleatum subsp. nucleatum (strain ATCC 25586 / DSM 15643 / BCRC 10681 / CIP 101130 / JCM 8532 / KCTC 2640 / LMG 13131 / VPI 4355).